Reading from the N-terminus, the 170-residue chain is Protein-export protein SecB (170 aa).

This sequence belongs to the SecB family. In terms of assembly, homotetramer, a dimer of dimers. One homotetramer interacts with 1 SecA dimer.

It is found in the cytoplasm. In terms of biological role, one of the proteins required for the normal export of preproteins out of the cell cytoplasm. It is a molecular chaperone that binds to a subset of precursor proteins, maintaining them in a translocation-competent state. It also specifically binds to its receptor SecA. The chain is Protein-export protein SecB from Xanthomonas campestris pv. campestris (strain 8004).